Reading from the N-terminus, the 187-residue chain is Transcriptional activator of sulfur metabolism MET28 (187 aa).

The region spanning 105-168 is the bZIP domain; that stretch reads DKIKQERRRK…EFWKAKLNDI (64 aa). Residues 106–136 form a basic motif region; it reads KIKQERRRKNTEASQRFRIRKKQKNFENMNK. Positions 137-151 are leucine-zipper; the sequence is LQNLNTQINKLRDRI.

This sequence belongs to the bZIP family. In terms of assembly, interacts with MET4 to form a heteromeric complex which also includes CBF1. Forms two alternate complexes associating MET28 with MET4 and either MET31 or MET32. Binds to DNA through the MET4-MET28-CBF1 complex.

Its subcellular location is the cytoplasm. The protein resides in the nucleus. Functionally, acts as an accessory factor in the activation of sulfur amino acids metabolism genes. Possesses no intrinsic transcription activation abilities. Binds to the MET16 promoter as a complex with MET4 and CBF1. Enhances the DNA-binding activity of CBF1. This chain is Transcriptional activator of sulfur metabolism MET28 (MET28), found in Saccharomyces cerevisiae (strain ATCC 204508 / S288c) (Baker's yeast).